The following is a 552-amino-acid chain: Probable protein kinase UbiB (552 aa).

The Protein kinase domain maps to 121–504; the sequence is HFDTVPLASA…QGLQRRVVNA (384 aa). ATP-binding positions include 127–135 and Lys-149; that span reads LASASISQV. Asp-284 (proton acceptor) is an active-site residue. A run of 2 helical transmembrane segments spans residues 501–521 and 530–550; these read VVNAIVGSGLLVAAAVLYGLH and IPVWSLISGCVGALALFSAWW.

The protein belongs to the ABC1 family. UbiB subfamily.

Its subcellular location is the cell inner membrane. It functions in the pathway cofactor biosynthesis; ubiquinone biosynthesis [regulation]. Functionally, is probably a protein kinase regulator of UbiI activity which is involved in aerobic coenzyme Q (ubiquinone) biosynthesis. This Xylella fastidiosa (strain M12) protein is Probable protein kinase UbiB.